Reading from the N-terminus, the 163-residue chain is 3-isopropylmalate dehydratase small subunit (163 aa).

The protein belongs to the LeuD family. LeuD type 2 subfamily. As to quaternary structure, heterodimer of LeuC and LeuD.

It carries out the reaction (2R,3S)-3-isopropylmalate = (2S)-2-isopropylmalate. It functions in the pathway amino-acid biosynthesis; L-leucine biosynthesis; L-leucine from 3-methyl-2-oxobutanoate: step 2/4. Its function is as follows. Catalyzes the isomerization between 2-isopropylmalate and 3-isopropylmalate, via the formation of 2-isopropylmaleate. This Ruminiclostridium cellulolyticum (strain ATCC 35319 / DSM 5812 / JCM 6584 / H10) (Clostridium cellulolyticum) protein is 3-isopropylmalate dehydratase small subunit.